The primary structure comprises 496 residues: SRCTHLENRDFVTGTQGTTRVTLVLELGGCVTITAEGKPSMDVWLDAIYQESPAKTREYCLHAKLSETKVAARCPTMGPAVLTEERQIGTVCKRDQSDRGWGNHCGLFGKGSIVACVKAACEAKKKATGYVYDANKIVYTVKVEPHTGDYVAANETHKGRKTATFTVSSEKTILTLGEYGDVSLLCRVASGVDLAQTIILELDKTAEHLPTAWQVHRDWFNDLALPWKHDGNPHWNNAERLVEFGAPHAVKMDVYNLGDQTGVLLKALAGVPVAHIEGNKYHLKSGHVTCEVGLEKLKMKGLTYTMCDKSKFAWKRTPTDSGHDTVVMEVTFSGSKPCRIPVRAVAHGSPDVNVAMLITPNPTIENDGGGFIEMQLPPGDNIIYVGELSHQWFQTGSSIGRVFQTTRKGIERLTVIGEHAWDFGSAGGFFSSIGKAVHTVLGGAFNSIFGGVGFLPKLLMGVALAWLGLNTRNPTMSMSFLMAGGLVLAMTLGVGA.

The Extracellular portion of the chain corresponds to 1–447; that stretch reads SRCTHLENRD…HTVLGGAFNS (447 aa). 6 cysteine pairs are disulfide-bonded: Cys-3-Cys-30, Cys-60-Cys-116, Cys-60-Cys-121, Cys-74-Cys-105, Cys-92-Cys-116, and Cys-92-Cys-121. The segment at 98–111 is fusion peptide; the sequence is DRGWGNHCGLFGKG. N-linked (GlcNAc...) asparagine; by host glycosylation is present at Asn-154. 2 disulfides stabilise this stretch: Cys-186–Cys-290 and Cys-307–Cys-338. A helical membrane pass occupies residues 448 to 468; it reads IFGGVGFLPKLLMGVALAWLG. The Cytoplasmic portion of the chain corresponds to 469-479; that stretch reads LNTRNPTMSMS. A helical membrane pass occupies residues 480–496; it reads FLMAGGLVLAMTLGVGA.

Homodimer; in the endoplasmic reticulum and Golgi. In terms of processing, N-glycosylated.

It is found in the virion membrane. Its subcellular location is the host endoplasmic reticulum membrane. Its function is as follows. Binds to host cell surface receptor and mediates fusion between viral and cellular membranes. Envelope protein is synthesized in the endoplasmic reticulum in the form of heterodimer with protein prM. They play a role in virion budding in the ER, and the newly formed immature particle is covered with 60 spikes composed of heterodimer between precursor prM and envelope protein E. The virion is transported to the Golgi apparatus where the low pH causes dissociation of PrM-E heterodimers and formation of E homodimers. prM-E cleavage is ineficient, and many virions are only partially matured. These uncleaved prM would play a role in immune evasion. The sequence is that of Genome polyprotein from Bos taurus (Bovine).